Reading from the N-terminus, the 407-residue chain is Imidazolonepropionase (407 aa).

2 residues coordinate Fe(3+): H74 and H76. Residues H74 and H76 each coordinate Zn(2+). R83, Y146, and H179 together coordinate 4-imidazolone-5-propanoate. Y146 serves as a coordination point for N-formimidoyl-L-glutamate. Position 244 (H244) interacts with Fe(3+). Residue H244 coordinates Zn(2+). Q247 is a 4-imidazolone-5-propanoate binding site. A Fe(3+)-binding site is contributed by D319. D319 lines the Zn(2+) pocket. Positions 321 and 323 each coordinate N-formimidoyl-L-glutamate. T324 provides a ligand contact to 4-imidazolone-5-propanoate.

It belongs to the metallo-dependent hydrolases superfamily. HutI family. Zn(2+) serves as cofactor. It depends on Fe(3+) as a cofactor.

Its subcellular location is the cytoplasm. It carries out the reaction 4-imidazolone-5-propanoate + H2O = N-formimidoyl-L-glutamate. Its pathway is amino-acid degradation; L-histidine degradation into L-glutamate; N-formimidoyl-L-glutamate from L-histidine: step 3/3. Its function is as follows. Catalyzes the hydrolytic cleavage of the carbon-nitrogen bond in imidazolone-5-propanoate to yield N-formimidoyl-L-glutamate. It is the third step in the universal histidine degradation pathway. The chain is Imidazolonepropionase from Salmonella heidelberg (strain SL476).